Here is an 896-residue protein sequence, read N- to C-terminus: Valine--tRNA ligase (896 aa).

A 'HIGH' region motif is present at residues 43-53 (PNVTGSLHIGH). The 'KMSKS' region motif lies at 545–549 (KMSKS). An ATP-binding site is contributed by K548. Positions 831-857 (DLDAERARLAKGIAAAEKERDGLAARL) form a coiled coil.

It belongs to the class-I aminoacyl-tRNA synthetase family. ValS type 1 subfamily. Monomer.

The protein localises to the cytoplasm. The enzyme catalyses tRNA(Val) + L-valine + ATP = L-valyl-tRNA(Val) + AMP + diphosphate. Its function is as follows. Catalyzes the attachment of valine to tRNA(Val). As ValRS can inadvertently accommodate and process structurally similar amino acids such as threonine, to avoid such errors, it has a 'posttransfer' editing activity that hydrolyzes mischarged Thr-tRNA(Val) in a tRNA-dependent manner. This is Valine--tRNA ligase from Rhizorhabdus wittichii (strain DSM 6014 / CCUG 31198 / JCM 15750 / NBRC 105917 / EY 4224 / RW1) (Sphingomonas wittichii).